Here is a 449-residue protein sequence, read N- to C-terminus: Na(+)/H(+) antiporter NhaA 1 (449 aa).

11 helical membrane-spanning segments follow: residues 32–52 (IEATSGAVLLLATVVALTLSN), 87–107 (GLMTLFFFIVALEIKREVVLG), 114–134 (MVAFSVVAAAGGMLVPMGLYL), 145–165 (GWGVVMPTDTAFVIGCLALLG), 174–194 (VFLLSLAVVDDLAAILVVAVG), 202–222 (TALALGAVGLVIIRGMALLGV), 233–253 (AIIWLAVNASGIHATIVGVIL), 318–338 (WVAFGVMPLFALANAGVSITI), 347–367 (LAVMAGFVLGKPIGVTAFAWL), 382–402 (WGGLVGGALLTGIGFTMALFI), and 417–437 (LGILAASVVSSVAGLTLLCMF).

The protein belongs to the NhaA Na(+)/H(+) (TC 2.A.33) antiporter family.

The protein localises to the cell inner membrane. It catalyses the reaction Na(+)(in) + 2 H(+)(out) = Na(+)(out) + 2 H(+)(in). Its function is as follows. Na(+)/H(+) antiporter that extrudes sodium in exchange for external protons. This chain is Na(+)/H(+) antiporter NhaA 1, found in Acidiphilium cryptum (strain JF-5).